We begin with the raw amino-acid sequence, 455 residues long: Ribulose bisphosphate carboxylase large chain (455 aa).

Lys5 carries the N6,N6,N6-trimethyllysine modification. Residues Asn114 and Thr164 each coordinate substrate. Lys166 acts as the Proton acceptor in catalysis. Lys168 is a binding site for substrate. The Mg(2+) site is built by Lys192, Asp194, and Glu195. Lys192 bears the N6-carboxylysine mark. Residue His285 is the Proton acceptor of the active site. Positions 286, 318, and 370 each coordinate substrate.

The protein belongs to the RuBisCO large chain family. Type I subfamily. Heterohexadecamer of 8 large chains and 8 small chains; disulfide-linked. The disulfide link is formed within the large subunit homodimers. It depends on Mg(2+) as a cofactor. In terms of processing, the disulfide bond which can form in the large chain dimeric partners within the hexadecamer appears to be associated with oxidative stress and protein turnover.

Its subcellular location is the plastid. It is found in the chloroplast. The catalysed reaction is 2 (2R)-3-phosphoglycerate + 2 H(+) = D-ribulose 1,5-bisphosphate + CO2 + H2O. The enzyme catalyses D-ribulose 1,5-bisphosphate + O2 = 2-phosphoglycolate + (2R)-3-phosphoglycerate + 2 H(+). Its function is as follows. RuBisCO catalyzes two reactions: the carboxylation of D-ribulose 1,5-bisphosphate, the primary event in carbon dioxide fixation, as well as the oxidative fragmentation of the pentose substrate in the photorespiration process. Both reactions occur simultaneously and in competition at the same active site. The sequence is that of Ribulose bisphosphate carboxylase large chain from Lupinus cosentinii (West Australian blue lupine).